Consider the following 273-residue polypeptide: Dermonecrotic toxin LapSicTox-alphaIB1b2 (273 aa).

Histidine 5 is a catalytic residue. Residues glutamate 25 and aspartate 27 each coordinate Mg(2+). Histidine 41 (nucleophile) is an active-site residue. 2 disulfides stabilise this stretch: cysteine 45-cysteine 51 and cysteine 47-cysteine 190. A Mg(2+)-binding site is contributed by aspartate 85. Asparagine 250 carries an N-linked (GlcNAc...) asparagine glycan.

The protein belongs to the arthropod phospholipase D family. Class II subfamily. Mg(2+) is required as a cofactor. As to expression, expressed by the venom gland.

The protein localises to the secreted. The enzyme catalyses an N-(acyl)-sphingosylphosphocholine = an N-(acyl)-sphingosyl-1,3-cyclic phosphate + choline. It carries out the reaction an N-(acyl)-sphingosylphosphoethanolamine = an N-(acyl)-sphingosyl-1,3-cyclic phosphate + ethanolamine. The catalysed reaction is a 1-acyl-sn-glycero-3-phosphocholine = a 1-acyl-sn-glycero-2,3-cyclic phosphate + choline. It catalyses the reaction a 1-acyl-sn-glycero-3-phosphoethanolamine = a 1-acyl-sn-glycero-2,3-cyclic phosphate + ethanolamine. Functionally, dermonecrotic toxins cleave the phosphodiester linkage between the phosphate and headgroup of certain phospholipids (sphingolipid and lysolipid substrates), forming an alcohol (often choline) and a cyclic phosphate. This toxin acts on sphingomyelin (SM). It may also act on ceramide phosphoethanolamine (CPE), lysophosphatidylcholine (LPC) and lysophosphatidylethanolamine (LPE), but not on lysophosphatidylserine (LPS), and lysophosphatidylglycerol (LPG). It acts by transphosphatidylation, releasing exclusively cyclic phosphate products as second products. Induces dermonecrosis, hemolysis, increased vascular permeability, edema, inflammatory response, and platelet aggregation. This Loxosceles apachea (Apache recluse spider) protein is Dermonecrotic toxin LapSicTox-alphaIB1b2.